Here is a 255-residue protein sequence, read N- to C-terminus: CCAAT/enhancer-binding protein delta (255 aa).

Disordered stretches follow at residues 1-42 (MTCA…AAPA), 91-121 (GGPARLGGPGPAPRPLKREPDWGDGDAPGSL), and 138-206 (PAAQ…QEMQ). Residue Lys-107 forms a Glycyl lysine isopeptide (Lys-Gly) (interchain with G-Cter in SUMO) linkage. Over residues 141 to 161 (QPTPPASPDPPRRSPAPPAPG) the composition is skewed to pro residues. Over residues 163–187 (ARDKAAGKRGPDRGSPEYRQRRERN) the composition is skewed to basic and acidic residues. One can recognise a bZIP domain in the interval 177–240 (SPEYRQRRER…AGLRRFFKQL (64 aa)). Residues 181–208 (RQRRERNNIAVRKSRDKAKRRNQEMQQK) are basic motif. Residues 212 to 240 (LSAENEKLQQRVEQLTRDLAGLRRFFKQL) form a leucine-zipper region.

This sequence belongs to the bZIP family. C/EBP subfamily. Binds DNA as a homodimer and as a heterodimer. Can form stable heterodimers with CEBPA, CEBPB and CEBPE. Directly interacts with SPI1/PU.1; this interaction does not affect DNA-binding properties of each partner. Interacts with PRDM16.

It localises to the nucleus. In terms of biological role, transcription activator that recognizes two different DNA motifs: the CCAAT homology common to many promoters and the enhanced core homology common to many enhancers. Important transcription factor regulating the expression of genes involved in immune and inflammatory responses. Transcriptional activator that enhances IL6 transcription alone and as heterodimer with CEBPB. In Ovis aries (Sheep), this protein is CCAAT/enhancer-binding protein delta (CEBPD).